Consider the following 81-residue polypeptide: Trefoil factor 3 (81 aa).

The first 22 residues, 1–22, serve as a signal peptide directing secretion; it reads METRAFWTTLLLVLVAGSSCKA. Residues 31-74 enclose the P-type domain; the sequence is SQCMVPANVRVDCGYPTVTSEQCNNRGCCFDSSIPNVPWCFKPL. 3 disulfides stabilise this stretch: Cys-33–Cys-59, Cys-43–Cys-58, and Cys-53–Cys-70.

In terms of assembly, monomer. Homodimer; disulfide-linked. In terms of tissue distribution, expressed in goblet cells of the intestines, and colon, in paraventricular hypothalamus and supraoptic nuclei. Weakly expressed in gastric epithelial cells (at protein level). Expressed by goblet cells of small and large intestinal epithelia, kidney and stomach. Expressed in the paraventricular hypothalamus, arcuate nucleus and amygdala of the brain. Weakly expressed in gastric epithelial cells.

It is found in the secreted. It localises to the extracellular space. The protein resides in the extracellular matrix. The protein localises to the cytoplasm. In terms of biological role, involved in the maintenance and repair of the intestinal mucosa. Promotes the mobility of epithelial cells in healing processes (motogen). The chain is Trefoil factor 3 (Tff3) from Rattus norvegicus (Rat).